Here is a 735-residue protein sequence, read N- to C-terminus: MPVADIEMVTGSAGHVDSKAASEYGTDLRRWRLKVHEGRHMWEYVDEDVAQTQQQTFAENYWLGQEYELPKMSTPIFAQDALDNGWAFFKRLQTQDGHWGCHDDGPLFVTSGIVISSYICGITLPDAMKNEMIRYLLNFVNEDGGWGLWINSPSTVFGTTMNYTMLRILGVPSTHPALLDARDTLLKMGSARALPTWGKFWMCALGAYEWDGMIPLAPEPLLAPGFLPLNPGNWWVHTRNVFVSMSYLFGHRFSAPMTPLIQELREELYDMPYHKIDWFAQQTNISDYDRLHPPTMLQKGLANALCYYEYVKVPYLRRKALDEALFQVEMEVHNTSYLCIAPVSFASNMLVMFHAHGANSHWVKGMADRIIDPMWMCREGMAASGTNGTSVWDTALTVQAALDGGLAQRPENHNTMLEALKFIEVSQITENPLGVSQGYRQPTKGAWPFSTRDQAYAVSDTTAVTVRAVIQLQALKSMPKLVSDERLAEAVDLIIGMENKCDGYSAFEPLRGPKALELLNITELYDNVMTESLYPECTSSVLLCLDTFTKAYPHHRPVEIQSIMARCARYLIKAQFPCGGWLASWGVCFTYATMFALQGLETVGLRESNSETCRNACSFLLQYQNDDGGWGEDLISIREKRYIQDPAGSQVTCTAYALMGLISAHCSNRDALRRGIRWLMRAQQATGEWLPGSLEGIFACPGGMRYPNYKFHFTLSAIGRYIERYGDEALYLKEQ.

The PFTB 1 repeat unit spans residues 129-170; it reads KNEMIRYLLNFVNEDGGWGLWINSPSTVFGTTMNYTMLRILG. Catalysis depends on D460, which acts as the Proton donor. PFTB repeat units follow at residues 487–528, 564–604, and 613–660; these read LAEA…YDNV, MARC…ETVG, and CRNA…ALMG.

Belongs to the terpene cyclase/mutase family.

It carries out the reaction (S)-2,3-epoxysqualene = (17Z)-protosta-17(20),24-dien-3beta-ol. Functionally, protostadienol synthase which cyclizes (3S)-oxidosqualene to (17Z)-protosta-17(20),24-dien-3-beta-ol (protostadienol), the biosynthetic precursor of helvolic acid, a secondary metabolite which promotes virulence. The sequence is that of Protostadienol synthase A (PDSA) from Arthroderma gypseum (strain ATCC MYA-4604 / CBS 118893) (Microsporum gypseum).